The following is a 162-amino-acid chain: uncharacterized protein (162 aa).

3 helical membrane-spanning segments follow: residues 7-27 (LIADYGYLAIFLMLVLGIVGL), 51-71 (LSILISFVGALLGMLISYMIG), and 134-154 (TYVAFAAIGAFLWCFVFITIG).

The protein belongs to the DedA family.

It localises to the cell membrane. This is an uncharacterized protein from Bacillus subtilis (strain 168).